A 357-amino-acid polypeptide reads, in one-letter code: MTEQMLDYFIVGAGLGGVAFAEVALQHQKSIFVFAGDKPPSSVAAAGVYNAVILKRFTLVSQAQEQINLLKVFYPEIEKRIQKNIIFDLPTYRRLASVEEQNNFIVASDRPLFQLFLSPKIISDKFKAVISPFGFGLMKQTGYVDTKLLLQSYRNYLQQNGCISAETFNYAELIIHPDFVEYKGQKAKQIIFAEGFQMKHNPFFKDLPLEGAKGELLVIRSENLDVNVLLKAGVFVLPIGNDLYKVGATYNWTDKTNKPTQSAKDELISELKELISCDFEVVEHLAGIRPTVKDRKPLVGRHPFHKNIYLLNGLGTRGVMLAPYLSYKLFDFIESDLPLDSSISIERYYNSITSSNK.

The FAD site is built by Ala13, Gly14, Ser42, Gly47, Arg289, Gly315, and Gly318. A D-proline-binding site is contributed by Arg289. D-serine is bound at residue Arg289.

This sequence belongs to the DAMOX/DASOX family. Requires FAD as cofactor.

It is found in the cytoplasm. It localises to the secreted. Its subcellular location is the cell wall. It catalyses the reaction a D-alpha-amino acid + O2 + H2O = a 2-oxocarboxylate + H2O2 + NH4(+). The catalysed reaction is D-phenylalanine + O2 + H2O = 3-phenylpyruvate + H2O2 + NH4(+). The enzyme catalyses D-lysine + O2 + H2O = 6-amino-2-oxohexanoate + H2O2 + NH4(+). It carries out the reaction D-methionine + O2 + H2O = 4-methylsulfanyl-2-oxobutanoate + H2O2 + NH4(+). It catalyses the reaction D-arginine + O2 + H2O = 5-guanidino-2-oxopentanoate + H2O2 + NH4(+). The catalysed reaction is D-ornithine + O2 + H2O = 5-amino-2-oxopentanoate + H2O2 + NH4(+). The enzyme catalyses D-leucine + O2 + H2O = 4-methyl-2-oxopentanoate + H2O2 + NH4(+). It carries out the reaction D-histidine + O2 + H2O = 3-(imidazol-5-yl)pyruvate + H2O2 + NH4(+). Its activity is regulated as follows. Activated by manganese, copper, and iron ions. Inhibited by barium, aluminum, and zinc ions. Functionally, catalyzes the oxidative deamination of D-amino acids with broad substrate specificity. This is D-amino-acid oxidase from Unknown prokaryotic organism.